Here is a 158-residue protein sequence, read N- to C-terminus: 2-C-methyl-D-erythritol 2,4-cyclodiphosphate synthase (158 aa).

2 residues coordinate a divalent metal cation: D9 and H11. 4-CDP-2-C-methyl-D-erythritol 2-phosphate is bound by residues 9–11 (DVH) and 35–36 (HS). An a divalent metal cation-binding site is contributed by H43. Residues 57-59 (DIG), 62-66 (FPDTD), 133-136 (TTTE), F140, and R143 each bind 4-CDP-2-C-methyl-D-erythritol 2-phosphate.

Belongs to the IspF family. Homotrimer. The cofactor is a divalent metal cation.

It catalyses the reaction 4-CDP-2-C-methyl-D-erythritol 2-phosphate = 2-C-methyl-D-erythritol 2,4-cyclic diphosphate + CMP. The protein operates within isoprenoid biosynthesis; isopentenyl diphosphate biosynthesis via DXP pathway; isopentenyl diphosphate from 1-deoxy-D-xylulose 5-phosphate: step 4/6. Functionally, involved in the biosynthesis of isopentenyl diphosphate (IPP) and dimethylallyl diphosphate (DMAPP), two major building blocks of isoprenoid compounds. Catalyzes the conversion of 4-diphosphocytidyl-2-C-methyl-D-erythritol 2-phosphate (CDP-ME2P) to 2-C-methyl-D-erythritol 2,4-cyclodiphosphate (ME-CPP) with a corresponding release of cytidine 5-monophosphate (CMP). In Haemophilus influenzae (strain 86-028NP), this protein is 2-C-methyl-D-erythritol 2,4-cyclodiphosphate synthase.